We begin with the raw amino-acid sequence, 1150 residues long: ATP-dependent helicase/deoxyribonuclease subunit B (1150 aa).

8 to 15 (GRAGSGKS) contacts ATP. Residues cysteine 786, cysteine 1106, cysteine 1109, and cysteine 1115 each contribute to the [4Fe-4S] cluster site.

This sequence belongs to the helicase family. AddB/RexB type 1 subfamily. In terms of assembly, heterodimer of AddA and AddB. The cofactor is Mg(2+). It depends on [4Fe-4S] cluster as a cofactor.

The heterodimer acts as both an ATP-dependent DNA helicase and an ATP-dependent, dual-direction single-stranded exonuclease. Recognizes the chi site generating a DNA molecule suitable for the initiation of homologous recombination. The AddB subunit has 5' -&gt; 3' nuclease activity but not helicase activity. The polypeptide is ATP-dependent helicase/deoxyribonuclease subunit B (Clostridium botulinum (strain Hall / ATCC 3502 / NCTC 13319 / Type A)).